A 446-amino-acid chain; its full sequence is Hepatocyte nuclear factor 4-beta (446 aa).

Positions 47-122 (NSFCAICGDR…AGMKKEAVQN (76 aa)) form a DNA-binding region, nuclear receptor. 2 NR C4-type zinc fingers span residues 50-70 (CAICGDRATGKHYGASSCDGC) and 86-110 (CRFSRQCIVDKDKRNQCRYCRLRKC). Positions 137–366 (NGSLSINVLT…SLLQELLLGG (230 aa)) constitute an NR LBD domain.

Belongs to the nuclear hormone receptor family. NR2 subfamily. In terms of assembly, homodimerization is required for HNF4-alpha to bind to its recognition site. In terms of tissue distribution, expressed in liver, kidney, stomach, intestine, lung, ovary, and testis. Not expressed in fat, muscle and brain.

It localises to the nucleus. Its function is as follows. Transcription factor; binds and activates the promoter for the HNF1-alpha gene. Seems to have a lower DNA binding activity than HNF4-alpha and is a weaker transactivator than the alpha isoform. This chain is Hepatocyte nuclear factor 4-beta (hnf4b), found in Xenopus laevis (African clawed frog).